The chain runs to 314 residues: 4-hydroxy-3-methylbut-2-enyl diphosphate reductase (314 aa).

Cysteine 12 contacts [4Fe-4S] cluster. Histidine 41 and histidine 74 together coordinate (2E)-4-hydroxy-3-methylbut-2-enyl diphosphate. Dimethylallyl diphosphate is bound by residues histidine 41 and histidine 74. Isopentenyl diphosphate-binding residues include histidine 41 and histidine 74. Cysteine 96 is a binding site for [4Fe-4S] cluster. Histidine 124 serves as a coordination point for (2E)-4-hydroxy-3-methylbut-2-enyl diphosphate. Residue histidine 124 participates in dimethylallyl diphosphate binding. Histidine 124 lines the isopentenyl diphosphate pocket. Catalysis depends on glutamate 126, which acts as the Proton donor. Threonine 167 is a binding site for (2E)-4-hydroxy-3-methylbut-2-enyl diphosphate. [4Fe-4S] cluster is bound at residue cysteine 197. (2E)-4-hydroxy-3-methylbut-2-enyl diphosphate contacts are provided by serine 225, serine 226, asparagine 227, and serine 269. The dimethylallyl diphosphate site is built by serine 225, serine 226, asparagine 227, and serine 269. Residues serine 225, serine 226, asparagine 227, and serine 269 each coordinate isopentenyl diphosphate.

Belongs to the IspH family. Requires [4Fe-4S] cluster as cofactor.

It carries out the reaction isopentenyl diphosphate + 2 oxidized [2Fe-2S]-[ferredoxin] + H2O = (2E)-4-hydroxy-3-methylbut-2-enyl diphosphate + 2 reduced [2Fe-2S]-[ferredoxin] + 2 H(+). The catalysed reaction is dimethylallyl diphosphate + 2 oxidized [2Fe-2S]-[ferredoxin] + H2O = (2E)-4-hydroxy-3-methylbut-2-enyl diphosphate + 2 reduced [2Fe-2S]-[ferredoxin] + 2 H(+). The protein operates within isoprenoid biosynthesis; dimethylallyl diphosphate biosynthesis; dimethylallyl diphosphate from (2E)-4-hydroxy-3-methylbutenyl diphosphate: step 1/1. It functions in the pathway isoprenoid biosynthesis; isopentenyl diphosphate biosynthesis via DXP pathway; isopentenyl diphosphate from 1-deoxy-D-xylulose 5-phosphate: step 6/6. Catalyzes the conversion of 1-hydroxy-2-methyl-2-(E)-butenyl 4-diphosphate (HMBPP) into a mixture of isopentenyl diphosphate (IPP) and dimethylallyl diphosphate (DMAPP). Acts in the terminal step of the DOXP/MEP pathway for isoprenoid precursor biosynthesis. The sequence is that of 4-hydroxy-3-methylbut-2-enyl diphosphate reductase from Haemophilus influenzae (strain 86-028NP).